Reading from the N-terminus, the 207-residue chain is ATP-dependent Clp protease proteolytic subunit (207 aa).

Ser111 acts as the Nucleophile in catalysis. His136 is a catalytic residue.

The protein belongs to the peptidase S14 family. As to quaternary structure, fourteen ClpP subunits assemble into 2 heptameric rings which stack back to back to give a disk-like structure with a central cavity, resembling the structure of eukaryotic proteasomes.

It localises to the cytoplasm. It carries out the reaction Hydrolysis of proteins to small peptides in the presence of ATP and magnesium. alpha-casein is the usual test substrate. In the absence of ATP, only oligopeptides shorter than five residues are hydrolyzed (such as succinyl-Leu-Tyr-|-NHMec, and Leu-Tyr-Leu-|-Tyr-Trp, in which cleavage of the -Tyr-|-Leu- and -Tyr-|-Trp bonds also occurs).. Its function is as follows. Cleaves peptides in various proteins in a process that requires ATP hydrolysis. Has a chymotrypsin-like activity. Plays a major role in the degradation of misfolded proteins. This is ATP-dependent Clp protease proteolytic subunit from Yersinia enterocolitica serotype O:8 / biotype 1B (strain NCTC 13174 / 8081).